The primary structure comprises 476 residues: Glycogen synthase (476 aa).

Lys-15 lines the ADP-alpha-D-glucose pocket.

It belongs to the glycosyltransferase 1 family. Bacterial/plant glycogen synthase subfamily.

The catalysed reaction is [(1-&gt;4)-alpha-D-glucosyl](n) + ADP-alpha-D-glucose = [(1-&gt;4)-alpha-D-glucosyl](n+1) + ADP + H(+). It participates in glycan biosynthesis; glycogen biosynthesis. In terms of biological role, synthesizes alpha-1,4-glucan chains using ADP-glucose. This is Glycogen synthase from Bacillus cereus (strain ZK / E33L).